Reading from the N-terminus, the 166-residue chain is MSLNIETKKVAVEEISAAIANAQTLVVAEYRGISVSSMTELRANARKEGVYLRVLKNTLARRAVQGTSFVELADQMVGPLVYAASEDAVAAAKVLHQFAKKDDKIVVKAGSYNGEVMNAAQVAELASIPSREELLSKLLFVMQAPVSGFARGLAALAEKKAGEEAA.

The protein belongs to the universal ribosomal protein uL10 family. In terms of assembly, part of the ribosomal stalk of the 50S ribosomal subunit. The N-terminus interacts with L11 and the large rRNA to form the base of the stalk. The C-terminus forms an elongated spine to which L12 dimers bind in a sequential fashion forming a multimeric L10(L12)X complex.

Functionally, forms part of the ribosomal stalk, playing a central role in the interaction of the ribosome with GTP-bound translation factors. This Neisseria gonorrhoeae (strain ATCC 700825 / FA 1090) protein is Large ribosomal subunit protein uL10.